The chain runs to 412 residues: MHIFNFLLFYPIFMSIYWIVGSIYYFFIKEKPFNRLLLVKSEHQQVEGISFLLACYNESETVQDTLSSVLSLEYPEKEIIIINDGSSDNTAEIIYEFKKNHDFKFVDLEVNRGKANALNEGIKQASYEYVMCLDADTVIDDDAPFYMIEDFKKNPKLGAVTGNPRIRNKSSILGKIQTIEYASIIGCIKRSQSLAGAINTISGVFTLFKKSALKDVGYWDTDMITEDIAVSWKLHLFDYEIKYEPRALCWMLVPETIGGLWKQRVRWAQGGHEVLLRDFWSTIKTKKLSLYILMFEQIASITWVYIVICYLSFLVITANILDYTYLKYSFSIFFFSSFTMTFINIIQFTVALFIDSRYEKKNIVGLIFLSWYPTLYWVINAAVVIMAFPKALKRKKGGYATWSSPDRGNIQR.

The next 4 membrane-spanning stretches (helical) occupy residues 7-28 (LLFY…YFFI), 298-320 (IASI…TANI), 332-354 (IFFF…ALFI), and 364-386 (VGLI…VVIM).

It belongs to the glycosyltransferase 2 family.

The protein localises to the cell membrane. N-acetylglucosaminyltransferase that catalyzes the polymerization of single monomer units of UDP-N-acetylglucosamine to produce the linear homomer poly-beta-1,6-N-acetyl-D-glucosamine (PNAG, also referred to as PIA), a biofilm adhesin polysaccharide. Requires IcaD for full activity. This chain is Poly-beta-1,6-N-acetyl-D-glucosamine synthase (icaA), found in Staphylococcus epidermidis.